The primary structure comprises 226 residues: UPF0758 protein M28_Spy0816 (226 aa).

Residues 103–225 form the MPN domain; the sequence is SVLTSVQVAE…YYSFREKSTL (123 aa). Residues His-174, His-176, and Asp-187 each contribute to the Zn(2+) site. Residues 174-187 carry the JAMM motif motif; the sequence is HNHPSGNIEPSSND.

Belongs to the UPF0758 family.

The polypeptide is UPF0758 protein M28_Spy0816 (Streptococcus pyogenes serotype M28 (strain MGAS6180)).